The sequence spans 439 residues: Secreted RxLR effector protein 117 (439 aa).

Residues 1–21 form the signal peptide; it reads MRGAYYVLAALLVVASSQIAA. The RxLR-dEER signature appears at 48–65; that stretch reads RYLRGGHDVHDDSANEER.

This sequence belongs to the RxLR effector family.

Its subcellular location is the secreted. It is found in the host nucleus. Secreted effector that acts as an elicitor that induces cell death in host plant cells. In Plasmopara viticola (Downy mildew of grapevine), this protein is Secreted RxLR effector protein 117.